We begin with the raw amino-acid sequence, 131 residues long: Small ribosomal subunit protein uS11 (131 aa).

It belongs to the universal ribosomal protein uS11 family. Part of the 30S ribosomal subunit. Interacts with proteins S7 and S18. Binds to IF-3.

Located on the platform of the 30S subunit, it bridges several disparate RNA helices of the 16S rRNA. Forms part of the Shine-Dalgarno cleft in the 70S ribosome. The polypeptide is Small ribosomal subunit protein uS11 (Chromobacterium violaceum (strain ATCC 12472 / DSM 30191 / JCM 1249 / CCUG 213 / NBRC 12614 / NCIMB 9131 / NCTC 9757 / MK)).